The sequence spans 406 residues: Endoplasmic reticulum resident protein 44 (406 aa).

An N-terminal signal peptide occupies residues 1-29 (MHPAVFLSLPDLRCSLLLLVTWVFTPVTT). The Thioredoxin domain maps to 30-138 (EITSLDTENI…VKALADYIRQ (109 aa)). 2 disulfides stabilise this stretch: C189–C241 and C301–C318. An interaction with ITPR1 region spans residues 236–285 (WIQDKCVPLVREITFENGEELTEEGLPFLILFHMKEDTESLEIFQNEVAR). The interval 360–387 (FHHGPDPTDTAPGEQAQDVASSPPESSF) is disordered. Over residues 377-387 (DVASSPPESSF) the composition is skewed to polar residues. The Prevents secretion from ER motif lies at 403–406 (RDEL).

In terms of assembly, forms mixed disulfides with both ERO1A and ERO1B and cargo folding intermediates; the interactions with ERO1A and ERO1B result in their retention in the endoplasmic reticulum. Directly interacts with ITPR1 in a pH-, redox state- and calcium-dependent manner, but not with ITPR2 or ITPR3. The strength of this interaction inversely correlates with calcium concentration.

The protein localises to the endoplasmic reticulum lumen. Its function is as follows. Mediates thiol-dependent retention in the early secretory pathway, forming mixed disulfides with substrate proteins through its conserved CRFS motif. Inhibits the calcium channel activity of ITPR1. May have a role in the control of oxidative protein folding in the endoplasmic reticulum. Required to retain ERO1A and ERO1B in the endoplasmic reticulum. In Homo sapiens (Human), this protein is Endoplasmic reticulum resident protein 44 (ERP44).